The chain runs to 65 residues: Small ribosomal subunit protein bS21 (65 aa).

The segment covering 46–57 has biased composition (basic residues); the sequence is RLKRSRSKRRAQ. A disordered region spans residues 46-65; the sequence is RLKRSRSKRRAQRANEERNS.

The protein belongs to the bacterial ribosomal protein bS21 family.

The chain is Small ribosomal subunit protein bS21 from Chlorobaculum tepidum (strain ATCC 49652 / DSM 12025 / NBRC 103806 / TLS) (Chlorobium tepidum).